A 281-amino-acid chain; its full sequence is MLKIAVPNKGSLSERAMEILAEAGYAGRGDSKSLNVFDEANNVEFFFLRPKDIAIYVAGGQLDLGITGRDLARDSQADVHEVLSLGFGSSTFRYAAPADEEWSIEKLDGKRIATSYPNLVRDDLAARGLSAEVLRLDGAVEVSIKLGVADAIADVVSTGRTLRQQGLAPFGEVLCTSEAVIVGRKDEKVTPEQQILLRRIQGILHAQNFLMLDYNVDRDNLDAATAVTPGLSGPTVSPLARDNWVAVRAMVPRRSANAIMDKLAGLGAEAILASEIRIARI.

This sequence belongs to the ATP phosphoribosyltransferase family. Long subfamily. Mg(2+) is required as a cofactor.

Its subcellular location is the cytoplasm. The catalysed reaction is 1-(5-phospho-beta-D-ribosyl)-ATP + diphosphate = 5-phospho-alpha-D-ribose 1-diphosphate + ATP. Its pathway is amino-acid biosynthesis; L-histidine biosynthesis; L-histidine from 5-phospho-alpha-D-ribose 1-diphosphate: step 1/9. Feedback inhibited by histidine. Its function is as follows. Catalyzes the condensation of ATP and 5-phosphoribose 1-diphosphate to form N'-(5'-phosphoribosyl)-ATP (PR-ATP). Has a crucial role in the pathway because the rate of histidine biosynthesis seems to be controlled primarily by regulation of HisG enzymatic activity. This Corynebacterium glutamicum (strain R) protein is ATP phosphoribosyltransferase.